The sequence spans 390 residues: Putative nickel insertion protein (390 aa).

The protein belongs to the LarC family.

This chain is Putative nickel insertion protein, found in Myxococcus xanthus (strain DK1622).